Reading from the N-terminus, the 275-residue chain is Putative phosphoenolpyruvate synthase regulatory protein (275 aa).

157–164 lines the ADP pocket; it reads GVSRCGKT.

Belongs to the pyruvate, phosphate/water dikinase regulatory protein family. PSRP subfamily.

The enzyme catalyses [pyruvate, water dikinase] + ADP = [pyruvate, water dikinase]-phosphate + AMP + H(+). It carries out the reaction [pyruvate, water dikinase]-phosphate + phosphate + H(+) = [pyruvate, water dikinase] + diphosphate. Functionally, bifunctional serine/threonine kinase and phosphorylase involved in the regulation of the phosphoenolpyruvate synthase (PEPS) by catalyzing its phosphorylation/dephosphorylation. This Bordetella bronchiseptica (strain ATCC BAA-588 / NCTC 13252 / RB50) (Alcaligenes bronchisepticus) protein is Putative phosphoenolpyruvate synthase regulatory protein.